Here is a 112-residue protein sequence, read N- to C-terminus: uncharacterized protein (112 aa).

N-linked (GlcNAc...) asparagine; by host glycosylation is found at Asn29 and Asn60. Residues 66-86 (IFNGLGFILIVIFIYLLLITL) form a helical membrane-spanning segment.

Belongs to the asfivirus B117L family.

The protein localises to the host membrane. The protein resides in the virion. This is an uncharacterized protein from Ornithodoros (relapsing fever ticks).